The following is a 331-amino-acid chain: N-arachidonyl glycine receptor (331 aa).

The Extracellular portion of the chain corresponds to 1–26 (MITLNNQDQPVPFNNSYPDEYEIAAL). N-linked (GlcNAc...) asparagine glycosylation occurs at asparagine 14. The helical transmembrane segment at 27–47 (VFYSCIFIIGLFVNITALWVF) threads the bilayer. The Cytoplasmic portion of the chain corresponds to 48–56 (SCTTKKRTT). The chain crosses the membrane as a helical span at residues 57–77 (VTIYMMNVALVDLIFIMTLPF). The Extracellular segment spans residues 78–95 (RMFYYAKDEWPFGEYFCQ). Cysteine 94 and cysteine 172 are disulfide-bonded. The helical transmembrane segment at 96–116 (ILGALTVFYPSIALWLLAFIS) threads the bilayer. Residues 117–138 (ADRYMAIVQPKYAKELKNTCKA) lie on the Cytoplasmic side of the membrane. A helical transmembrane segment spans residues 139–159 (VLACVGVWIMTLTTTIPLLLL). The Extracellular segment spans residues 160–191 (HKDPDKDSTPATCLKISDIVYLKAVNVLNFTR). Residue asparagine 188 is glycosylated (N-linked (GlcNAc...) asparagine). Residues 192 to 212 (LTFFFLIPLFIMIGCYLVIIH) form a helical membrane-spanning segment. The Cytoplasmic portion of the chain corresponds to 213 to 232 (NLLHGRTSKLKPKVKEKSIR). The helical transmembrane segment at 233 to 253 (IIITLLVQVLVCFMPFHICFA) threads the bilayer. Residues 254–268 (FLMLGTGENSYSPWG) are Extracellular-facing. Residues 269–289 (AFTTFLMNLSTCLDVILYYIV) traverse the membrane as a helical segment. The Cytoplasmic portion of the chain corresponds to 290-331 (SKQFQARVISVMLYRNYLRGMRRKSFRSGSLRSLSNINSEML). Position 322 is a phosphoserine (serine 322).

It belongs to the G-protein coupled receptor 1 family.

It is found in the cell membrane. Its subcellular location is the cytoplasmic vesicle membrane. Its function is as follows. G protein-coupled receptor (GPCR) that plays a role in diverse physiological processes particularly within the immune and nervous systems. Becomes active when triggered by various endogenous ligands including endocannabinoid N-arachidonyl glycine (NAGly), delta-9-tetrahydrocannabinol or resolvin D2/RvD2 derived from the omega-3 fatty acid docosahexaenoic acid (DHA). Upon RvD2 binding, facilitates the resolution of inflammation, aiding in tissue repair and homeostasis. Mechanistically, RvD2 ligation initiates Galphas protein coupling, activation of cAMP-PKA signaling pathway and phosphorylation of STAT3, leading to RvD2-stimulated macrophage phagocytosis. Mediates NAGly-induced process of reorganization of actin filaments and induction of acrosomal exocytosis. Activation by N-arachidonoyl glycine (NAGly) can also induce apoptosis in macrophages. Plays a role in homeostasis of CD8+ subsets of intraepithelial lymphocytes (IELs) (CD8alphaalpha and CD8alphabeta IELs) in small intestine by supporting preferential migration of CD8alphaalpha T-cells to intraepithelial compartment over lamina propria compartment, and by mediating their reconstitution into small intestine after bone marrow transplant. Participates also in hypotensive responses, mediating reduction in intraocular and blood pressure. This Macaca fascicularis (Crab-eating macaque) protein is N-arachidonyl glycine receptor.